The primary structure comprises 952 residues: DNA topoisomerase 1 (952 aa).

The region spanning 12 to 135 (RRLVIVESPA…VKRMVFHEIT (124 aa)) is the Toprim domain. Residues E18 and D104 each coordinate Mg(2+). Residues 150–602 (NQKLVDAQET…RFYFGEGDGT (453 aa)) form the Topo IA-type catalytic domain. An interaction with DNA region spans residues 184–189 (SAGRVQ). Y334 (O-(5'-phospho-DNA)-tyrosine intermediate) is an active-site residue. The segment at 847-952 (RFGPYVTDGE…KATASKTSED (106 aa)) is disordered. The segment covering 871–884 (TPERGYELLAEKRA) has biased composition (basic and acidic residues). Basic residues predominate over residues 885 to 906 (KGPAKKTAKKAVKKTAAKKAPA). Composition is skewed to low complexity over residues 907-930 (KKAA…AAKS) and 937-952 (AKTA…TSED).

It belongs to the type IA topoisomerase family. In terms of assembly, monomer. Mg(2+) serves as cofactor.

It carries out the reaction ATP-independent breakage of single-stranded DNA, followed by passage and rejoining.. Releases the supercoiling and torsional tension of DNA, which is introduced during the DNA replication and transcription, by transiently cleaving and rejoining one strand of the DNA duplex. Introduces a single-strand break via transesterification at a target site in duplex DNA. The scissile phosphodiester is attacked by the catalytic tyrosine of the enzyme, resulting in the formation of a DNA-(5'-phosphotyrosyl)-enzyme intermediate and the expulsion of a 3'-OH DNA strand. The free DNA strand then undergoes passage around the unbroken strand, thus removing DNA supercoils. Finally, in the religation step, the DNA 3'-OH attacks the covalent intermediate to expel the active-site tyrosine and restore the DNA phosphodiester backbone. Functionally, relaxes supercoiled plasmid in vitro; in the presence of sIHF (integration host factor) relaxation is decreased. The chain is DNA topoisomerase 1 from Streptomyces coelicolor (strain ATCC BAA-471 / A3(2) / M145).